We begin with the raw amino-acid sequence, 336 residues long: F420-dependent glucose-6-phosphate dehydrogenase (336 aa).

Residue Asp-39 participates in coenzyme F420-(gamma-Glu)n binding. Catalysis depends on His-40, which acts as the Proton donor. Residues Thr-76 and 107-108 (TG) each bind coenzyme F420-(gamma-Glu)n. Glu-109 (proton acceptor) is an active-site residue. Residues Asn-112, 177 to 178 (GG), and 180 to 181 (VV) each bind coenzyme F420-(gamma-Glu)n. Residues Thr-195, Lys-198, Lys-259, and Arg-283 each contribute to the substrate site.

The protein belongs to the F420-dependent glucose-6-phosphate dehydrogenase family. In terms of assembly, homodimer.

The catalysed reaction is oxidized coenzyme F420-(gamma-L-Glu)(n) + D-glucose 6-phosphate + H(+) = 6-phospho-D-glucono-1,5-lactone + reduced coenzyme F420-(gamma-L-Glu)(n). Its function is as follows. Catalyzes the coenzyme F420-dependent oxidation of glucose 6-phosphate (G6P) to 6-phosphogluconolactone. Appears to have a role in resistance to oxidative stress, via its consumption of G6P that serves as a source of reducing power to combat oxidative stress in mycobacteria. The protein is F420-dependent glucose-6-phosphate dehydrogenase of Mycolicibacterium fortuitum (Mycobacterium fortuitum).